The primary structure comprises 241 residues: Translation initiation factor IF-3 (241 aa).

Positions 193–203 are enriched in basic and acidic residues; the sequence is AAEKARQKAIQ. Residues 193 to 241 are disordered; sequence AAEKARQKAIQEGRAAPAQDDTEDEEIEKLERELEEQDDEDDDEAEATE. Positions 212–241 are enriched in acidic residues; that stretch reads DDTEDEEIEKLERELEEQDDEDDDEAEATE.

This sequence belongs to the IF-3 family. Monomer.

It is found in the cytoplasm. IF-3 binds to the 30S ribosomal subunit and shifts the equilibrium between 70S ribosomes and their 50S and 30S subunits in favor of the free subunits, thus enhancing the availability of 30S subunits on which protein synthesis initiation begins. This chain is Translation initiation factor IF-3, found in Sorangium cellulosum (strain So ce56) (Polyangium cellulosum (strain So ce56)).